Here is a 258-residue protein sequence, read N- to C-terminus: Phosphate import ATP-binding protein PstB (258 aa).

The ABC transporter domain maps to 5-247; that stretch reads LDLKDVNIYY…EKIFSNPTQK (243 aa). 37–44 contributes to the ATP binding site; sequence GPSGCGKS.

This sequence belongs to the ABC transporter superfamily. Phosphate importer (TC 3.A.1.7) family. In terms of assembly, the complex is composed of two ATP-binding proteins (PstB), two transmembrane proteins (PstC and PstA) and a solute-binding protein (PstS).

Its subcellular location is the cell membrane. It catalyses the reaction phosphate(out) + ATP + H2O = ADP + 2 phosphate(in) + H(+). Its function is as follows. Part of the ABC transporter complex PstSACB involved in phosphate import. Responsible for energy coupling to the transport system. In Rhodococcus jostii (strain RHA1), this protein is Phosphate import ATP-binding protein PstB.